The following is a 285-amino-acid chain: Diaminopimelate epimerase 2 (285 aa).

Residues N11, N63, 73–74 (GN), N158, N191, 209–210 (ER), and 219–220 (GS) contribute to the substrate site.

The protein belongs to the diaminopimelate epimerase family. In terms of assembly, homodimer.

Its subcellular location is the cytoplasm. The enzyme catalyses (2S,6S)-2,6-diaminopimelate = meso-2,6-diaminopimelate. Its pathway is amino-acid biosynthesis; L-lysine biosynthesis via DAP pathway; DL-2,6-diaminopimelate from LL-2,6-diaminopimelate: step 1/1. Its function is as follows. Catalyzes the stereoinversion of LL-2,6-diaminopimelate (L,L-DAP) to meso-diaminopimelate (meso-DAP), a precursor of L-lysine and an essential component of the bacterial peptidoglycan. This Nostoc sp. (strain PCC 7120 / SAG 25.82 / UTEX 2576) protein is Diaminopimelate epimerase 2.